We begin with the raw amino-acid sequence, 62 residues long: Cryptic Mu-phage protein com (62 aa).

This sequence belongs to the com family.

The sequence is that of Cryptic Mu-phage protein com from Shigella dysenteriae.